The following is a 132-amino-acid chain: Phosphoribosyl-AMP cyclohydrolase (132 aa).

Aspartate 79 serves as a coordination point for Mg(2+). Cysteine 80 contacts Zn(2+). Mg(2+)-binding residues include aspartate 81 and aspartate 83. Zn(2+)-binding residues include cysteine 100 and cysteine 107.

The protein belongs to the PRA-CH family. Homodimer. It depends on Mg(2+) as a cofactor. Zn(2+) is required as a cofactor.

The protein resides in the cytoplasm. The catalysed reaction is 1-(5-phospho-beta-D-ribosyl)-5'-AMP + H2O = 1-(5-phospho-beta-D-ribosyl)-5-[(5-phospho-beta-D-ribosylamino)methylideneamino]imidazole-4-carboxamide. It participates in amino-acid biosynthesis; L-histidine biosynthesis; L-histidine from 5-phospho-alpha-D-ribose 1-diphosphate: step 3/9. Its function is as follows. Catalyzes the hydrolysis of the adenine ring of phosphoribosyl-AMP. The chain is Phosphoribosyl-AMP cyclohydrolase from Acidovorax ebreus (strain TPSY) (Diaphorobacter sp. (strain TPSY)).